The following is a 90-amino-acid chain: NAD(P)H-quinone oxidoreductase subunit H, chloroplastic (90 aa).

It belongs to the complex I 49 kDa subunit family. In terms of assembly, NDH is composed of at least 16 different subunits, 5 of which are encoded in the nucleus.

It is found in the plastid. It localises to the chloroplast thylakoid membrane. The catalysed reaction is a plastoquinone + NADH + (n+1) H(+)(in) = a plastoquinol + NAD(+) + n H(+)(out). It carries out the reaction a plastoquinone + NADPH + (n+1) H(+)(in) = a plastoquinol + NADP(+) + n H(+)(out). Functionally, NDH shuttles electrons from NAD(P)H:plastoquinone, via FMN and iron-sulfur (Fe-S) centers, to quinones in the photosynthetic chain and possibly in a chloroplast respiratory chain. The immediate electron acceptor for the enzyme in this species is believed to be plastoquinone. Couples the redox reaction to proton translocation, and thus conserves the redox energy in a proton gradient. The chain is NAD(P)H-quinone oxidoreductase subunit H, chloroplastic (ndhH) from Secale cereale (Rye).